We begin with the raw amino-acid sequence, 399 residues long: MAKNRHLFTSESVSDGHPDKIADQISDAILDAIISKDPDARVACETTVTTGLVLVAGEITTSVYVDIPKIVRDTIKEIGYTRAKYGFDAETCAVLTAIDEQSPDIAQGVDEALESRSGNEIDAAIEAIGAGDQGLMFGFATDETEELMPLPIFLAHGLARKLTELRKTNKLDYLRPDAKTQVTVEYDEFNQPVRIDTIVVSTQHHPDITQEQIAKDLHTYLFPEVIDASFLDEDTKYFINPTGRFVIGGPLGDAGLTGRKIIVDTYGGYARHGGGAFSGKDPTKVDRSGAYAARYVAKNIVAAGLAKKVEVQVAYAIGVARPVSISIDTYGTSDYSEQELIDGVNALFDLRPAGIIHMLDLRRPIYRQTAAFGHFGRSDLDLPWERTDKAEALKKLIVK.

ATP is bound at residue His17. Asp19 is a Mg(2+) binding site. Glu45 serves as a coordination point for K(+). Glu58 and Gln101 together coordinate L-methionine. A flexible loop region spans residues 101–111 (QSPDIAQGVDE). Residues 177–179 (DAK), 244–245 (RF), Asp253, 259–260 (RK), Ala276, and Lys280 each bind ATP. Asp253 serves as a coordination point for L-methionine. Lys284 provides a ligand contact to L-methionine.

It belongs to the AdoMet synthase family. Homotetramer; dimer of dimers. It depends on Mg(2+) as a cofactor. K(+) is required as a cofactor.

The protein resides in the cytoplasm. It catalyses the reaction L-methionine + ATP + H2O = S-adenosyl-L-methionine + phosphate + diphosphate. It participates in amino-acid biosynthesis; S-adenosyl-L-methionine biosynthesis; S-adenosyl-L-methionine from L-methionine: step 1/1. Its function is as follows. Catalyzes the formation of S-adenosylmethionine (AdoMet) from methionine and ATP. The overall synthetic reaction is composed of two sequential steps, AdoMet formation and the subsequent tripolyphosphate hydrolysis which occurs prior to release of AdoMet from the enzyme. This is S-adenosylmethionine synthase from Listeria monocytogenes serovar 1/2a (strain ATCC BAA-679 / EGD-e).